A 236-amino-acid polypeptide reads, in one-letter code: Small ribosomal subunit protein uS5 (236 aa).

Over residues 1–10 the composition is skewed to basic and acidic residues; the sequence is MTENNEKDIQ. Residues 1–64 form a disordered region; sequence MTENNEKDIQ…GRDGGREAEK (64 aa). The span at 11–27 shows a compositional bias: low complexity; that stretch reads VTEAVAAPATETAAPAT. The segment covering 28 to 64 has biased composition (basic and acidic residues); that stretch reads TDDRRGGARRGERGDRGQGRGDRGGRGGRDGGREAEK. One can recognise an S5 DRBM domain in the interval 67–130; it reads FVERVVTINR…EEAKKSFFRV (64 aa).

It belongs to the universal ribosomal protein uS5 family. Part of the 30S ribosomal subunit. Contacts proteins S4 and S8.

In terms of biological role, with S4 and S12 plays an important role in translational accuracy. Located at the back of the 30S subunit body where it stabilizes the conformation of the head with respect to the body. This is Small ribosomal subunit protein uS5 from Arthrobacter sp. (strain FB24).